Reading from the N-terminus, the 109-residue chain is Probable cytochrome b-c1 complex subunit 7 (109 aa).

This sequence belongs to the UQCRB/QCR7 family. Component of the ubiquinol-cytochrome c oxidoreductase (cytochrome b-c1 complex, complex III, CIII), a multisubunit enzyme composed of 3 respiratory subunits cytochrome b, cytochrome c1 and Rieske protein, 2 core protein subunits, and additional low-molecular weight protein subunits. The complex exists as an obligatory dimer and forms supercomplexes (SCs) in the inner mitochondrial membrane with cytochrome c oxidase (complex IV, CIV).

Its subcellular location is the mitochondrion inner membrane. Component of the ubiquinol-cytochrome c oxidoreductase, a multisubunit transmembrane complex that is part of the mitochondrial electron transport chain which drives oxidative phosphorylation. The respiratory chain contains 3 multisubunit complexes succinate dehydrogenase (complex II, CII), ubiquinol-cytochrome c oxidoreductase (cytochrome b-c1 complex, complex III, CIII) and cytochrome c oxidase (complex IV, CIV), that cooperate to transfer electrons derived from NADH and succinate to molecular oxygen, creating an electrochemical gradient over the inner membrane that drives transmembrane transport and the ATP synthase. The cytochrome b-c1 complex catalyzes electron transfer from ubiquinol to cytochrome c, linking this redox reaction to translocation of protons across the mitochondrial inner membrane, with protons being carried across the membrane as hydrogens on the quinol. In the process called Q cycle, 2 protons are consumed from the matrix, 4 protons are released into the intermembrane space and 2 electrons are passed to cytochrome c. This is Probable cytochrome b-c1 complex subunit 7 from Dictyostelium discoideum (Social amoeba).